We begin with the raw amino-acid sequence, 224 residues long: Adenylate kinase (224 aa).

An ATP-binding site is contributed by 10-15 (GSGKST). The segment at 30-59 (SSGDMIRAEIEKGSELGKELKKYLAKGELI) is NMP. Residues S31, R36, 57–59 (ELI), 83–86 (GYPR), and Q90 each bind AMP. The segment at 124-161 (GRRICPKCGAVYHLRYRPPKVPGKCDLCGSQLIQREDD) is LID. R125 is an ATP binding site. C128 and C131 together coordinate Zn(2+). Residue 134-135 (VY) participates in ATP binding. Zn(2+) contacts are provided by C148 and C151. AMP is bound by residues R158 and R169. G197 provides a ligand contact to ATP.

It belongs to the adenylate kinase family. Monomer.

It localises to the cytoplasm. It carries out the reaction AMP + ATP = 2 ADP. It functions in the pathway purine metabolism; AMP biosynthesis via salvage pathway; AMP from ADP: step 1/1. In terms of biological role, catalyzes the reversible transfer of the terminal phosphate group between ATP and AMP. Plays an important role in cellular energy homeostasis and in adenine nucleotide metabolism. In Thermococcus onnurineus (strain NA1), this protein is Adenylate kinase.